Reading from the N-terminus, the 275-residue chain is tRNA (guanine-N(1)-)-methyltransferase (275 aa).

Residues G124 and 149–154 each bind S-adenosyl-L-methionine; that span reads IGDYVL.

The protein belongs to the RNA methyltransferase TrmD family. Homodimer.

The protein localises to the cytoplasm. It catalyses the reaction guanosine(37) in tRNA + S-adenosyl-L-methionine = N(1)-methylguanosine(37) in tRNA + S-adenosyl-L-homocysteine + H(+). Functionally, specifically methylates guanosine-37 in various tRNAs. This chain is tRNA (guanine-N(1)-)-methyltransferase, found in Bifidobacterium animalis subsp. lactis (strain AD011).